Reading from the N-terminus, the 302-residue chain is ATP synthase gamma chain (302 aa).

Belongs to the ATPase gamma chain family. In terms of assembly, F-type ATPases have 2 components, CF(1) - the catalytic core - and CF(0) - the membrane proton channel. CF(1) has five subunits: alpha(3), beta(3), gamma(1), delta(1), epsilon(1). CF(0) has three main subunits: a, b and c.

The protein resides in the cell inner membrane. Produces ATP from ADP in the presence of a proton gradient across the membrane. The gamma chain is believed to be important in regulating ATPase activity and the flow of protons through the CF(0) complex. This Bartonella bacilliformis (strain ATCC 35685 / KC583 / Herrer 020/F12,63) protein is ATP synthase gamma chain.